We begin with the raw amino-acid sequence, 263 residues long: Endonuclease 8 (263 aa).

The Schiff-base intermediate with DNA role is filled by P2. The active-site Proton donor is E3. Residue K53 is the Proton donor; for beta-elimination activity of the active site. Q70, R125, and N169 together coordinate DNA. The FPG-type zinc finger occupies 229-263; it reads KVFHRDGEACERCGGIIEKTTLSSRPFYWCPHCQK. The Proton donor; for delta-elimination activity role is filled by R253.

The protein belongs to the FPG family. Requires Zn(2+) as cofactor.

The catalysed reaction is 2'-deoxyribonucleotide-(2'-deoxyribose 5'-phosphate)-2'-deoxyribonucleotide-DNA = a 3'-end 2'-deoxyribonucleotide-(2,3-dehydro-2,3-deoxyribose 5'-phosphate)-DNA + a 5'-end 5'-phospho-2'-deoxyribonucleoside-DNA + H(+). Its function is as follows. Involved in base excision repair of DNA damaged by oxidation or by mutagenic agents. Acts as a DNA glycosylase that recognizes and removes damaged bases. Has a preference for oxidized pyrimidines, such as thymine glycol, 5,6-dihydrouracil and 5,6-dihydrothymine. Has AP (apurinic/apyrimidinic) lyase activity and introduces nicks in the DNA strand. Cleaves the DNA backbone by beta-delta elimination to generate a single-strand break at the site of the removed base with both 3'- and 5'-phosphates. This is Endonuclease 8 from Salmonella schwarzengrund (strain CVM19633).